Reading from the N-terminus, the 1142-residue chain is Auxin response factor 5 (1142 aa).

The TF-B3 DNA-binding region spans 148 to 250 (FCKTLTASDT…QLLLGIRRAN (103 aa)). The PB1 domain maps to 1009 to 1093 (RTFTKVYKRG…RCIRILSPQE (85 aa)). Residues 1114-1142 (SSSDGVNGWRPRCDQNPGNPSIGPYDQFE) form a disordered region.

It belongs to the ARF family. In terms of assembly, homodimers and heterodimers. As to expression, expressed in roots, culms, leaves and young panicles.

Its subcellular location is the nucleus. Its function is as follows. Auxin response factors (ARFs) are transcriptional factors that bind specifically to the DNA sequence 5'-TGTCTC-3' found in the auxin-responsive promoter elements (AuxREs). The polypeptide is Auxin response factor 5 (ARF5) (Oryza sativa subsp. japonica (Rice)).